We begin with the raw amino-acid sequence, 421 residues long: Exopolysaccharide production protein ExoF (421 aa).

The signal sequence occupies residues M1 to S31.

The protein localises to the periplasm. The protein operates within glycan metabolism; exopolysaccharide biosynthesis. Functionally, involved in succinoglycan (EPS I) synthesis. Needed for the addition of the first sugar (galactose) to the isoprenoid carrier. This is Exopolysaccharide production protein ExoF (exoF) from Rhizobium meliloti (strain 1021) (Ensifer meliloti).